Reading from the N-terminus, the 87-residue chain is Small ribosomal subunit protein bS20 (87 aa).

Residues 1–28 (MANSAQARKRARQASAQRDHNMSQRSEL) form a disordered region. The span at 17–28 (QRDHNMSQRSEL) shows a compositional bias: basic and acidic residues.

It belongs to the bacterial ribosomal protein bS20 family.

Binds directly to 16S ribosomal RNA. The protein is Small ribosomal subunit protein bS20 of Thiobacillus denitrificans (strain ATCC 25259 / T1).